The chain runs to 229 residues: Ribonuclease 3 (229 aa).

The RNase III domain occupies 4-133 (WEELQESVGF…FIGALYLDNG (130 aa)). A Mg(2+)-binding site is contributed by glutamate 46. Aspartate 50 is an active-site residue. Mg(2+) is bound by residues aspartate 119 and glutamate 122. Glutamate 122 is a catalytic residue. Positions 159-228 (DYKTQLQEIV…AQFAINQLTH (70 aa)) constitute a DRBM domain.

This sequence belongs to the ribonuclease III family. In terms of assembly, homodimer. Mg(2+) is required as a cofactor.

The protein resides in the cytoplasm. It catalyses the reaction Endonucleolytic cleavage to 5'-phosphomonoester.. In terms of biological role, digests double-stranded RNA. Involved in the processing of primary rRNA transcript to yield the immediate precursors to the large and small rRNAs (23S and 16S). Processes some mRNAs, and tRNAs when they are encoded in the rRNA operon. Processes pre-crRNA and tracrRNA of type II CRISPR loci if present in the organism. The protein is Ribonuclease 3 of Listeria monocytogenes serotype 4b (strain CLIP80459).